A 461-amino-acid polypeptide reads, in one-letter code: Ribosomal protein uS12 methylthiotransferase RimO (461 aa).

In terms of domain architecture, MTTase N-terminal spans 9–124 (PRIGMVSLGC…VMDAVHLNLP (116 aa)). [4Fe-4S] cluster is bound by residues Cys18, Cys54, Cys83, Cys159, Cys163, and Cys166. Residues 145–387 (LTPRHYAYLK…AVAEAVSSQK (243 aa)) enclose the Radical SAM core domain. The TRAM domain occupies 389–461 (QQRVGATMQV…QGHDLIAVPV (73 aa)).

Belongs to the methylthiotransferase family. RimO subfamily. The cofactor is [4Fe-4S] cluster.

It localises to the cytoplasm. It catalyses the reaction L-aspartate(89)-[ribosomal protein uS12]-hydrogen + (sulfur carrier)-SH + AH2 + 2 S-adenosyl-L-methionine = 3-methylsulfanyl-L-aspartate(89)-[ribosomal protein uS12]-hydrogen + (sulfur carrier)-H + 5'-deoxyadenosine + L-methionine + A + S-adenosyl-L-homocysteine + 2 H(+). Its function is as follows. Catalyzes the methylthiolation of an aspartic acid residue of ribosomal protein uS12. The protein is Ribosomal protein uS12 methylthiotransferase RimO of Polaromonas naphthalenivorans (strain CJ2).